The following is a 79-amino-acid chain: MSDIEARVKKIIAEQLGVEEGQVTSEKSFVADLGADSLDTVELVMALEDEFGIEIPDEDAEKITTVQNAIDYANTHHKA.

Positions 2–77 constitute a Carrier domain; sequence SDIEARVKKI…NAIDYANTHH (76 aa). O-(pantetheine 4'-phosphoryl)serine is present on Ser37.

The protein belongs to the acyl carrier protein (ACP) family. 4'-phosphopantetheine is transferred from CoA to a specific serine of apo-ACP by AcpS. This modification is essential for activity because fatty acids are bound in thioester linkage to the sulfhydryl of the prosthetic group.

The protein localises to the cytoplasm. The protein operates within lipid metabolism; fatty acid biosynthesis. Functionally, carrier of the growing fatty acid chain in fatty acid biosynthesis. The protein is Acyl carrier protein of Polaromonas naphthalenivorans (strain CJ2).